The sequence spans 169 residues: MFEQWDALCAVLFSFSIAQELKTHADIVNQKGEKIGKAELIQTNSGVLIKLEASNLPPNAELAFHIHELGKCDPPDFKSAKGHFNPFKKKHGLLNPEGPHAGDMPNIHTDDKGNVRVQVLNPFVTLKKGKKNSLFKEGGTALVIHGGPDDYKSDPAGNAGKRIACGVVK.

The first 18 residues, 1–18, serve as a signal peptide directing secretion; the sequence is MFEQWDALCAVLFSFSIA. 3 residues coordinate Cu cation: His-65, His-67, and His-83. Cys-72 and Cys-165 form a disulfide bridge. The Zn(2+) site is built by His-83, His-91, His-100, and Asp-103. Residue His-145 coordinates Cu cation.

Belongs to the Cu-Zn superoxide dismutase family. Requires Cu cation as cofactor. Zn(2+) serves as cofactor.

The enzyme catalyses 2 superoxide + 2 H(+) = H2O2 + O2. Destroys radicals which are normally produced within the cells and which are toxic to biological systems. This Aquifex aeolicus (strain VF5) protein is Superoxide dismutase [Cu-Zn] 1 (sodC1).